The sequence spans 1032 residues: MASVPVYCLCRLPYDVTRFMIECDVCQDWFHGSCVGVEEDKAAEIDLYHCPNCQVTHGPSVMRKRRGAVKHADVGLGRDSGRPVKTGSAQFVRELRCRTFPSADEVLLKPTGAQLTVEFLEERSFSVPVLVLRKDGLGMNLPPSSFSVTDVEHYIGTEKEIDVIDVSRQADLKMKLGEFVEYYNSPNRDRVLNVISLEFSDTRLSNLVETPKIVRKLSWVENLWPEESIFERPNVQKYCLMGVKDSYTDFHIDFGGTSVWYHVLRGEKIFYLIRPTAANLSLFERWSSSSNQNELFFGDQVDMCYKCSVKQGNTLFIPTGWIHAVLTPVDCLAFGGNFLHSLNIDMQLRAYEIEKRLSTADLFKFPNFETVCWYVGKHLLDTFRGLRENRRHPATYLVHGAKALNNAFRGWTRKESLGEHEQEIPDTIKTQQLVKDLAKEIRLVEDIFQQNIGRSGTPFGGSQGLPSPHPKAQLNTPLTFSQHLSKKRGPKPKEAFGGGGVGPPGAKKKSQKGKEIKTEAGELDLLEIHTKHTLKKFQPGCKVKKSKLELPDDCLDDFEEKINKSKLKLVLTNGKLQGKKGRAGSANGAGSSLQQFQPHMATLSDFDSEDELQIDETPPPRRRPSLPSKKKLAGLPRKLPRAKPCSDPHRIREPGEVDFDIEEDYTTDEEMLTMQGVKGGAGGILDLLKASKQVAGLDSALSEEAPASPSTRDAIQGMLSMANPPSSSSSSSSSSPLSISGGGEMMGLMKEKGGREGWMSGVKKSERKAVFQRPGKRPIKRPARHLSDDESLDEQETLGTCFKDSDYVYPSLESDEEDHVSKSKMKRKRNWDDTPWSPKARVTPTLPKQERPVREGARVASVETGLAAAAAKLAQQEQQKTITKRKYTKKKTPQEKVHSTVAQLQHQPDSAPVSPPLPSEPPVDCIVEERRVEVYSASLLDHEYTAGPGPFSPGGPRGSGAMAPGVFLTSRRPSLSPQNSSSYSPSAPSPGGLVTPTSAGACQGKRPKKGLATAKQRLGKILKIHRNGKLLL.

A PHD-type zinc finger spans residues P5 to T56. The tract at residues R65–P83 is linker. One can recognise a JmjC domain in the interval F199–K355. T248 is a substrate binding site. Residues H251 and D253 each coordinate Fe cation. Residue K268 participates in substrate binding. Fe cation is bound at residue H323. Disordered regions lie at residues S455–E515, Q577–D660, L697–A857, Q875–V923, and E943–K1015. A compositionally biased stretch (polar residues) spans Q473–H483. Over residues A583–S592 the composition is skewed to low complexity. Residues P620–L632 show a composition bias toward basic residues. A compositionally biased stretch (basic and acidic residues) spans P644–G655. Composition is skewed to low complexity over residues S699–S710 and P724–I739. Positions P774–R784 are enriched in basic residues. Positions K848–A857 are enriched in basic and acidic residues. Positions I882–K891 are enriched in basic residues. Residues S970–P990 are compositionally biased toward low complexity.

Belongs to the JHDM1 histone demethylase family. JHDM1D subfamily. The cofactor is Fe(2+).

It is found in the nucleus. Its subcellular location is the nucleolus. The catalysed reaction is N(6),N(6)-dimethyl-L-lysyl(36)-[histone H3] + 2 2-oxoglutarate + 2 O2 = L-lysyl(36)-[histone H3] + 2 formaldehyde + 2 succinate + 2 CO2. The enzyme catalyses N(6),N(6)-dimethyl-L-lysyl(9)-[histone H3] + 2 2-oxoglutarate + 2 O2 = L-lysyl(9)-[histone H3] + 2 formaldehyde + 2 succinate + 2 CO2. In terms of biological role, histone lysine demethylase with selectivity for the di- and monomethyl states that plays a key role cell cycle progression, rDNA transcription and brain development. Demethylates mono- and dimethylated histone H3 'Lys-9' residue (H3K9Me1 and H3K9Me2), dimethylated H3 'Lys-27' (H3K27Me2) and monomethylated histone H4 'Lys-20' residue (H4K20Me1). Acts as a transcription activator as H3K9Me1, H3K9Me2, H3K27Me2 and H4K20Me1 are epigenetic repressive marks. Involved in cell cycle progression by being required to control G1-S transition. Acts as a coactivator of rDNA transcription, by activating polymerase I (pol I) mediated transcription of rRNA genes. Has activity toward H4K20Me1 only when nucleosome is used as a substrate and when not histone octamer is used as substrate. Required for brain development, probably by regulating expression of neuron-specific genes. This is Histone lysine demethylase PHF8 (phf8) from Danio rerio (Zebrafish).